Consider the following 199-residue polypeptide: NAD(P)H dehydrogenase (quinone) (199 aa).

The Flavodoxin-like domain occupies 4-190 (VLVLYYSAYG…AGARYQGRRV (187 aa)). FMN-binding positions include 10–15 (SAYGHI) and 78–80 (TRF). Residue Tyr-12 participates in NAD(+) binding. Residue Trp-98 coordinates substrate. Residues 113 to 119 (STATQHG) and His-134 each bind FMN.

It belongs to the WrbA family. It depends on FMN as a cofactor.

The catalysed reaction is a quinone + NADH + H(+) = a quinol + NAD(+). It catalyses the reaction a quinone + NADPH + H(+) = a quinol + NADP(+). This chain is NAD(P)H dehydrogenase (quinone), found in Methylocella silvestris (strain DSM 15510 / CIP 108128 / LMG 27833 / NCIMB 13906 / BL2).